The chain runs to 270 residues: A-type potassium channel modulatory protein KCNIP2 (270 aa).

The segment covering 1 to 17 (MRGQGRKESLSDSRDLD) has biased composition (basic and acidic residues). The segment at 1–32 (MRGQGRKESLSDSRDLDGSYDQLTGHPPGPTK) is disordered. At S9 the chain carries Phosphoserine. 2 S-palmitoyl cysteine lipidation sites follow: C45 and C46. Positions 81–137 (FELSTVCHRPEGLEQLQEQTKFTRKELQVLYRGFKNECPSGIVNEENFKQIYSQFFP) constitute an EF-hand 1; degenerate domain. 3 EF-hand domains span residues 140 to 175 (DSSTYATFLFNAFDTNHDGSVSFEDFVAGLSVILRG), 176 to 211 (TVDDRLNWAFNLYDLNKDGCITKEEMLDIMKSIYDM), and 224 to 259 (APREHVESFFQKMDRNKDGVVTIEEFIESCQKDENI). 14 residues coordinate Ca(2+): D153, N155, D157, S159, D164, D189, N191, D193, C195, E200, D237, N239, D241, and E248. Residues 257 to 270 (ENIMRSMQLFDNVI) are interaction with KCND2.

This sequence belongs to the recoverin family. In terms of assembly, component of heteromultimeric potassium channels. Identified in potassium channel complexes containing KCND1, KCND2, KCND3, KCNIP1, KCNIP2, KCNIP3, KCNIP4, DPP6 and DPP10. The KCND2-KCNIP2 channel complex contains four KCND2 and four KCNIP2 subunits. Interacts with KCND2. Probably part of a complex consisting of KCNIP1, KCNIP2 isoform 3 and KCND2. At least isoform 2 and isoform 3 can self-associate to form homodimers and homotetramers. Isoform 3 interacts with KCNIP1 in a calcium-dependent manner. Interacts with KCND3; each KCNIP2 monomer interacts with two adjacent KCND3 subunits, through both the N-terminal inactivation ball of a KCND3 subunit and a C-terminal helix from the adjacent KCND3 subunit, clamping them together; this interaction modulates the channel gating kinetics. Palmitoylated. Palmitoylation enhances association with the plasma membrane. In terms of tissue distribution, expressed in brain. Colocalizes with KCND2 in excitatory neurons including cortical and hippocampal CA1 pyramidal cells. Isoform 3 is expressed in heart and in umbilical vein endothelial cells. Not expressed in fetal heart.

Its subcellular location is the cell membrane. In terms of biological role, regulatory subunit of Kv4/D (Shal)-type voltage-gated rapidly inactivating A-type potassium channels. Modulates channel density, inactivation kinetics and rate of recovery from inactivation in a calcium-dependent and isoform-specific manner. Involved in KCND2 and KCND3 trafficking to the cell surface. May be required for the expression of I(To) currents in the heart. In Homo sapiens (Human), this protein is A-type potassium channel modulatory protein KCNIP2.